Here is a 312-residue protein sequence, read N- to C-terminus: Olfactory receptor 2M3 (312 aa).

Residues 1–25 (MARENSTFNSDFILLGIFNHSPTHT) are Extracellular-facing. Asn5 carries N-linked (GlcNAc...) asparagine glycosylation. A helical membrane pass occupies residues 26–49 (FLFFLVLAIFSVAFMGNSVMVLLI). Over 50-57 (YLDTQLHT) the chain is Cytoplasmic. The helical transmembrane segment at 58-79 (PMYLLLSQLSLMDLMLICTTVP) threads the bilayer. The Extracellular segment spans residues 80–100 (KMAFNYLSGSKSISMAGCATQ). Cysteines 97 and 189 form a disulfide. A helical membrane pass occupies residues 101–120 (IFFYTSLLGSECFLLAVMAY). Topologically, residues 121–139 (DRYTAICHPLRYTNLMSPK) are cytoplasmic. Residues 140–158 (ICGLMTAFSWILGSTDGII) form a helical membrane-spanning segment. Topologically, residues 159–195 (DVVATFSFSYCGSREIAHFFCDFPSLLILSCSDTSIF) are extracellular. Residues 196–219 (EKILFICCIVMIVFPVAIIIASYA) form a helical membrane-spanning segment. Topologically, residues 220–236 (RVILAVIHMGSGEGRRK) are cytoplasmic. A helical membrane pass occupies residues 237-259 (AFTTCSSHLLVVGMYYGAALFMY). The Extracellular segment spans residues 260–272 (IRPTSDRSPTQDK). The chain crosses the membrane as a helical span at residues 273–292 (MVSVFYTILTPMLNPLIYSL). At 293 to 312 (RNKEVTRAFMKILGKGKSGE) the chain is on the cytoplasmic side.

This sequence belongs to the G-protein coupled receptor 1 family.

It localises to the cell membrane. In terms of biological role, odorant receptor. This is Olfactory receptor 2M3 (OR2M3) from Homo sapiens (Human).